The chain runs to 162 residues: RNA pyrophosphohydrolase (162 aa).

One can recognise a Nudix hydrolase domain in the interval 7 to 149 (KYRPCVGIML…KKEVYKTVIE (143 aa)). Positions 40–61 (GGVDDGEELEQAALRELLEEVG) match the Nudix box motif.

It belongs to the Nudix hydrolase family. RppH subfamily. A divalent metal cation serves as cofactor.

Functionally, accelerates the degradation of transcripts by removing pyrophosphate from the 5'-end of triphosphorylated RNA, leading to a more labile monophosphorylated state that can stimulate subsequent ribonuclease cleavage. The protein is RNA pyrophosphohydrolase of Wolbachia pipientis wMel.